A 92-amino-acid polypeptide reads, in one-letter code: PqqA binding protein (92 aa).

It belongs to the PqqD family. Monomer. Interacts with PqqE.

It participates in cofactor biosynthesis; pyrroloquinoline quinone biosynthesis. Functions as a PqqA binding protein and presents PqqA to PqqE, in the pyrroloquinoline quinone (PQQ) biosynthetic pathway. In Xanthomonas campestris pv. campestris (strain B100), this protein is PqqA binding protein.